The sequence spans 384 residues: uncharacterized protein (384 aa).

The Integrase catalytic domain occupies 137–303 (EHDAPNRLWQ…VPGSRYQPSA (167 aa)).

This is an uncharacterized protein from Escherichia coli (strain K12).